A 600-amino-acid polypeptide reads, in one-letter code: Proline--tRNA ligase (600 aa).

It belongs to the class-II aminoacyl-tRNA synthetase family. ProS type 1 subfamily. Homodimer.

It localises to the cytoplasm. It catalyses the reaction tRNA(Pro) + L-proline + ATP = L-prolyl-tRNA(Pro) + AMP + diphosphate. In terms of biological role, catalyzes the attachment of proline to tRNA(Pro) in a two-step reaction: proline is first activated by ATP to form Pro-AMP and then transferred to the acceptor end of tRNA(Pro). As ProRS can inadvertently accommodate and process non-cognate amino acids such as alanine and cysteine, to avoid such errors it has two additional distinct editing activities against alanine. One activity is designated as 'pretransfer' editing and involves the tRNA(Pro)-independent hydrolysis of activated Ala-AMP. The other activity is designated 'posttransfer' editing and involves deacylation of mischarged Ala-tRNA(Pro). The misacylated Cys-tRNA(Pro) is not edited by ProRS. The protein is Proline--tRNA ligase of Synechococcus sp. (strain ATCC 27144 / PCC 6301 / SAUG 1402/1) (Anacystis nidulans).